The chain runs to 339 residues: tRNA N6-adenosine threonylcarbamoyltransferase (339 aa).

Fe cation is bound by residues H111 and H115. Substrate-binding positions include 139-143 (LVSGG), D172, G185, D189, and N280. D308 provides a ligand contact to Fe cation.

The protein belongs to the KAE1 / TsaD family. It depends on Fe(2+) as a cofactor.

The protein localises to the cytoplasm. The catalysed reaction is L-threonylcarbamoyladenylate + adenosine(37) in tRNA = N(6)-L-threonylcarbamoyladenosine(37) in tRNA + AMP + H(+). In terms of biological role, required for the formation of a threonylcarbamoyl group on adenosine at position 37 (t(6)A37) in tRNAs that read codons beginning with adenine. Is involved in the transfer of the threonylcarbamoyl moiety of threonylcarbamoyl-AMP (TC-AMP) to the N6 group of A37, together with TsaE and TsaB. TsaD likely plays a direct catalytic role in this reaction. The sequence is that of tRNA N6-adenosine threonylcarbamoyltransferase from Bacteroides fragilis (strain ATCC 25285 / DSM 2151 / CCUG 4856 / JCM 11019 / LMG 10263 / NCTC 9343 / Onslow / VPI 2553 / EN-2).